We begin with the raw amino-acid sequence, 73 residues long: UPF0435 protein lin1819 (73 aa).

It belongs to the UPF0435 family.

The chain is UPF0435 protein lin1819 from Listeria innocua serovar 6a (strain ATCC BAA-680 / CLIP 11262).